Reading from the N-terminus, the 321-residue chain is Beta-ketoacyl-[acyl-carrier-protein] synthase III (321 aa).

Residues C115 and H248 contribute to the active site. Residues 249 to 253 (QANIR) are ACP-binding. The active site involves N278.

The protein belongs to the thiolase-like superfamily. FabH family. As to quaternary structure, homodimer.

The protein resides in the cytoplasm. It catalyses the reaction malonyl-[ACP] + acetyl-CoA + H(+) = 3-oxobutanoyl-[ACP] + CO2 + CoA. It participates in lipid metabolism; fatty acid biosynthesis. Its function is as follows. Catalyzes the condensation reaction of fatty acid synthesis by the addition to an acyl acceptor of two carbons from malonyl-ACP. Catalyzes the first condensation reaction which initiates fatty acid synthesis and may therefore play a role in governing the total rate of fatty acid production. Possesses both acetoacetyl-ACP synthase and acetyl transacylase activities. Its substrate specificity determines the biosynthesis of branched-chain and/or straight-chain of fatty acids. The chain is Beta-ketoacyl-[acyl-carrier-protein] synthase III from Azoarcus sp. (strain BH72).